Here is a 220-residue protein sequence, read N- to C-terminus: 26S proteasome non-ATPase regulatory subunit 9 (220 aa).

2 coiled-coil regions span residues 4-32 and 61-91; these read GTTT…GQIL and RLAR…YHSE. The PDZ domain maps to 102–200; sequence RASALDLDSD…QLDLILVPKT (99 aa).

This sequence belongs to the proteasome subunit p27 family. As to quaternary structure, interacts with PI31; this interaction is increased by PI31 ADP-ribosylation. Interacts with Rpt5.

In terms of biological role, acts as a chaperone during the assembly of the 26S proteasome, specifically of the base subcomplex of the PA700/19S regulatory complex (RC). The polypeptide is 26S proteasome non-ATPase regulatory subunit 9 (Drosophila melanogaster (Fruit fly)).